Here is a 587-residue protein sequence, read N- to C-terminus: ATP-dependent lipid A-core flippase (587 aa).

A run of 5 helical transmembrane segments spans residues 31-51, 68-88, 145-165, 169-189, and 259-279; these read LIAS…LIYL, LKIM…TNFI, GSLI…AVMF, WELT…ITIV, and VQII…TPLI. The ABC transmembrane type-1 domain occupies 32-315; it reads IASGIALVFN…LTNVNSQFQR (284 aa). The 237-residue stretch at 347-583 folds into the ABC transporter domain; it reads LEFKNVSFAY…NGAYKQLYSM (237 aa). 381 to 388 is a binding site for ATP; sequence GRSGSGKS.

Belongs to the ABC transporter superfamily. Lipid exporter (TC 3.A.1.106) family. As to quaternary structure, homodimer.

The protein localises to the cell inner membrane. It carries out the reaction ATP + H2O + lipid A-core oligosaccharideSide 1 = ADP + phosphate + lipid A-core oligosaccharideSide 2.. In terms of biological role, involved in lipopolysaccharide (LPS) biosynthesis. Translocates lipid A-core from the inner to the outer leaflet of the inner membrane. Transmembrane domains (TMD) form a pore in the inner membrane and the ATP-binding domain (NBD) is responsible for energy generation. This chain is ATP-dependent lipid A-core flippase, found in Haemophilus influenzae (strain 86-028NP).